The following is a 402-amino-acid chain: MVVSVTPRHSTGGDGIRSVTVLGSTGSVGSNTVELIEAYPERYRTVALVARRNVAALAGQARRLRPEVAVVADEAHYADLKDALAGTGIAAAAGPAAVVEAAQRPADWVMAAIVGAAGLEPTLAAARRGAIVAFANKECLVCAGELLMAEVRRHGATLLPVDSEHSAIFQVFDPERRPAVSRLILTASGGPFRTWTRERMAAATPKEACAHPNWTMGAKISVDSASMMNKGLEIIEACHLFGMPDGQIDVLVHPQSVVHSMVEYVDGSVLAQLGTPDMRTPIAVALGWPDRIATPGARLDLIKSSRLEFEAPDPLRFPALRLARHALQCGGAAPTLLNAANEVAVQAFLEERIGFLDIERVVEATLASLPHSELNDLDDVRTADADARRFASEMVAAGRGSR.

The NADPH site is built by Thr-25, Gly-26, Ser-27, Val-28, Arg-52, Asn-53, and Asn-136. A 1-deoxy-D-xylulose 5-phosphate-binding site is contributed by Lys-137. Residue Glu-138 coordinates NADPH. Residue Asp-162 participates in Mn(2+) binding. 1-deoxy-D-xylulose 5-phosphate is bound by residues Ser-163, Glu-164, Ser-188, and His-211. A Mn(2+)-binding site is contributed by Glu-164. NADPH is bound at residue Gly-217. 1-deoxy-D-xylulose 5-phosphate-binding residues include Ser-224, Asn-229, Lys-230, and Glu-233. Mn(2+) is bound at residue Glu-233.

This sequence belongs to the DXR family. Mg(2+) serves as cofactor. Requires Mn(2+) as cofactor.

The catalysed reaction is 2-C-methyl-D-erythritol 4-phosphate + NADP(+) = 1-deoxy-D-xylulose 5-phosphate + NADPH + H(+). It participates in isoprenoid biosynthesis; isopentenyl diphosphate biosynthesis via DXP pathway; isopentenyl diphosphate from 1-deoxy-D-xylulose 5-phosphate: step 1/6. Its function is as follows. Catalyzes the NADPH-dependent rearrangement and reduction of 1-deoxy-D-xylulose-5-phosphate (DXP) to 2-C-methyl-D-erythritol 4-phosphate (MEP). The sequence is that of 1-deoxy-D-xylulose 5-phosphate reductoisomerase from Rhodospirillum centenum (strain ATCC 51521 / SW).